The following is a 541-amino-acid chain: Protopine 6-monooxygenase (541 aa).

Residues 9–29 (LLLNTWISAYSMAALLALVLV) traverse the membrane as a helical segment. Cysteine 476 contacts heme.

It belongs to the cytochrome P450 family. It depends on heme as a cofactor.

The protein localises to the endoplasmic reticulum membrane. It carries out the reaction protopine + reduced [NADPH--hemoprotein reductase] + O2 = 6-hydroxyprotopine + oxidized [NADPH--hemoprotein reductase] + H2O + H(+). It functions in the pathway alkaloid biosynthesis. Functionally, catalyzes the conversion of protopine and allocryptopine to dihydrosanguinarine and dihydrochelerythrine, respectively, in the biosynthesis of isoquinoline alkaloid sanguinarine. In Papaver somniferum (Opium poppy), this protein is Protopine 6-monooxygenase (CYP82N3).